The primary structure comprises 85 residues: uncharacterized protein (85 aa).

This is an uncharacterized protein from Lactococcus phage mv4 (Lactococcus delbrueckii bacteriophage mv4).